We begin with the raw amino-acid sequence, 219 residues long: Small ribosomal subunit protein uS5 (219 aa).

Polar residues predominate over residues 1 to 21 (MTDQNQKANQGNGLQTTNLQA). The interval 1-61 (MTDQNQKANQ…NQNRRFQKPA (61 aa)) is disordered. Over residues 35 to 47 (GIKKAVSKKEGGG) the composition is skewed to basic and acidic residues. An S5 DRBM domain is found at 66–129 (FEERIVKLKR…KAAHNSLHTI (64 aa)).

It belongs to the universal ribosomal protein uS5 family. As to quaternary structure, part of the 30S ribosomal subunit. Contacts proteins S4 and S8.

Its function is as follows. With S4 and S12 plays an important role in translational accuracy. Located at the back of the 30S subunit body where it stabilizes the conformation of the head with respect to the body. In Mycoplasma pneumoniae (strain ATCC 29342 / M129 / Subtype 1) (Mycoplasmoides pneumoniae), this protein is Small ribosomal subunit protein uS5.